The following is a 734-amino-acid chain: Photosystem I P700 chlorophyll a apoprotein A2 (734 aa).

8 helical membrane passes run I46–A69, L135–Q158, L175–I199, M273–Y291, I330–Y353, A369–I395, A417–H439, and F517–V535. [4Fe-4S] cluster contacts are provided by C559 and C568. Helical transmembrane passes span A575–W596 and L643–I665. Residues H654, M662, and Y670 each coordinate chlorophyll a. Phylloquinone is bound at residue W671. The helical transmembrane segment at L707 to A727 threads the bilayer.

Belongs to the PsaA/PsaB family. In terms of assembly, the PsaA/B heterodimer binds the P700 chlorophyll special pair and subsequent electron acceptors. PSI consists of a core antenna complex that captures photons, and an electron transfer chain that converts photonic excitation into a charge separation. The eukaryotic PSI reaction center is composed of at least 11 subunits. Requires P700 is a chlorophyll a/chlorophyll a' dimer, A0 is one or more chlorophyll a, A1 is one or both phylloquinones and FX is a shared 4Fe-4S iron-sulfur center. as cofactor.

It localises to the plastid. The protein localises to the chloroplast thylakoid membrane. It carries out the reaction reduced [plastocyanin] + hnu + oxidized [2Fe-2S]-[ferredoxin] = oxidized [plastocyanin] + reduced [2Fe-2S]-[ferredoxin]. Functionally, psaA and PsaB bind P700, the primary electron donor of photosystem I (PSI), as well as the electron acceptors A0, A1 and FX. PSI is a plastocyanin-ferredoxin oxidoreductase, converting photonic excitation into a charge separation, which transfers an electron from the donor P700 chlorophyll pair to the spectroscopically characterized acceptors A0, A1, FX, FA and FB in turn. Oxidized P700 is reduced on the lumenal side of the thylakoid membrane by plastocyanin. This Helianthus annuus (Common sunflower) protein is Photosystem I P700 chlorophyll a apoprotein A2.